The sequence spans 521 residues: Hyccin (521 aa).

Thr-306 carries the post-translational modification Phosphothreonine. The residue at position 321 (Ser-321) is a Phosphoserine. Positions 355–373 (AASSTSQSGLSNSSHNCSN) are enriched in low complexity. The disordered stretch occupies residues 355 to 413 (AASSTSQSGLSNSSHNCSNKTSVGKNQRRSGGSKAGAKERETAGESCRDHFARKQTQRA). Residues 390–406 (GAKERETAGESCRDHFA) show a composition bias toward basic and acidic residues. Ser-415, Ser-422, Ser-433, Ser-453, and Ser-465 each carry phosphoserine.

Belongs to the Hyccin family. As to quaternary structure, component of a phosphatidylinositol 4-kinase (PI4K) complex, composed of PI4KA, EFR3 (EFR3A or EFR3B), TTC7 (TTC7A or TTC7B) and HYCC (HYCC1 or HYCC2). Interacts with TTC7 (TTC7A or TTC7B), interaction is direct. Predominantly expressed in the central nervous system, where it is found in neurons but not in myelinating cells. Lower abundance is observed in peripheral neurons, where it is detectable only at early postnatal ages. Expressed in both oligodendrocytes and neurons.

Its subcellular location is the cytoplasm. The protein resides in the cytosol. It is found in the cell membrane. Component of a complex required to localize phosphatidylinositol 4-kinase (PI4K) to the plasma membrane. The complex acts as a regulator of phosphatidylinositol 4-phosphate (PtdIns(4)P) synthesis. HYCC1 plays a key role in oligodendrocytes formation, a cell type with expanded plasma membrane that requires generation of PtdIns(4)P. Its role in oligodendrocytes formation probably explains its importance in myelination of the central and peripheral nervous system. May also have a role in the beta-catenin/Lef signaling pathway. In Mus musculus (Mouse), this protein is Hyccin (Hycc1).